Consider the following 131-residue polypeptide: Type IV wide pilus major component PilA4 (131 aa).

Residues 1–6 constitute a propeptide, leader sequence; sequence MRNAKG. Phenylalanine 7 is subject to N-methylphenylalanine. A helical transmembrane segment spans residues 7–27; the sequence is FTLIELLIVIAIIAILAAVLI. The cysteines at positions 95 and 130 are disulfide-linked.

As to quaternary structure, interacts with PilQ. Post-translationally, found in three forms of 14-kDa, 18-kDa and a glycosylated 23-kDa form. Both narrow and wide pili are glycosylated.

Its subcellular location is the cell inner membrane. The protein localises to the cell outer membrane. It is found in the periplasm. In terms of biological role, plays an essential role in the assembly of two types of T4P pili: a wide and a narrow that participate in natural transformation and twitching motility. Major component of the wide pilus that is essential for natural transformation working as a DNA translocator structure that spans the inner and outer membranes. In addition, participates in the assembly of the narrow pilus composed of the PilA5 subunit that is required for twitching motility. This chain is Type IV wide pilus major component PilA4 (pilA4), found in Thermus thermophilus (strain ATCC BAA-163 / DSM 7039 / HB27).